The chain runs to 481 residues: tRNA-2-methylthio-N(6)-dimethylallyladenosine synthase (481 aa).

The MTTase N-terminal domain maps to 24-140 (RKLFIESYGC…LPNLINEVEE (117 aa)). [4Fe-4S] cluster-binding residues include cysteine 33, cysteine 69, cysteine 103, cysteine 178, cysteine 182, and cysteine 185. Residues 164-410 (QSNGVSAFVS…VDLQQKHSKQ (247 aa)) form the Radical SAM core domain. The TRAM domain maps to 413–476 (NSVIGTTVEV…SATLIGEPIG (64 aa)).

Belongs to the methylthiotransferase family. MiaB subfamily. Monomer. Requires [4Fe-4S] cluster as cofactor.

The protein resides in the cytoplasm. It carries out the reaction N(6)-dimethylallyladenosine(37) in tRNA + (sulfur carrier)-SH + AH2 + 2 S-adenosyl-L-methionine = 2-methylsulfanyl-N(6)-dimethylallyladenosine(37) in tRNA + (sulfur carrier)-H + 5'-deoxyadenosine + L-methionine + A + S-adenosyl-L-homocysteine + 2 H(+). Functionally, catalyzes the methylthiolation of N6-(dimethylallyl)adenosine (i(6)A), leading to the formation of 2-methylthio-N6-(dimethylallyl)adenosine (ms(2)i(6)A) at position 37 in tRNAs that read codons beginning with uridine. This Christiangramia forsetii (strain DSM 17595 / CGMCC 1.15422 / KT0803) (Gramella forsetii) protein is tRNA-2-methylthio-N(6)-dimethylallyladenosine synthase.